Here is a 153-residue protein sequence, read N- to C-terminus: Cell division protein SepF (153 aa).

It belongs to the SepF family. In terms of assembly, homodimer. Interacts with FtsZ.

The protein resides in the cytoplasm. In terms of biological role, cell division protein that is part of the divisome complex and is recruited early to the Z-ring. Probably stimulates Z-ring formation, perhaps through the cross-linking of FtsZ protofilaments. Its function overlaps with FtsA. The sequence is that of Cell division protein SepF from Clostridium novyi (strain NT).